A 93-amino-acid chain; its full sequence is Integration host factor subunit beta (93 aa).

It belongs to the bacterial histone-like protein family. As to quaternary structure, heterodimer of an alpha and a beta chain.

In terms of biological role, this protein is one of the two subunits of integration host factor, a specific DNA-binding protein that functions in genetic recombination as well as in transcriptional and translational control. This Vibrio parahaemolyticus serotype O3:K6 (strain RIMD 2210633) protein is Integration host factor subunit beta.